Here is a 96-residue protein sequence, read N- to C-terminus: Co-chaperonin GroES (96 aa).

It belongs to the GroES chaperonin family. As to quaternary structure, heptamer of 7 subunits arranged in a ring. Interacts with the chaperonin GroEL.

The protein localises to the cytoplasm. Functionally, together with the chaperonin GroEL, plays an essential role in assisting protein folding. The GroEL-GroES system forms a nano-cage that allows encapsulation of the non-native substrate proteins and provides a physical environment optimized to promote and accelerate protein folding. GroES binds to the apical surface of the GroEL ring, thereby capping the opening of the GroEL channel. The chain is Co-chaperonin GroES from Allochromatium vinosum (Chromatium vinosum).